Consider the following 298-residue polypeptide: Enoyl-CoA hydratase AKT6-1 (298 aa).

The segment at 1-23 (MTFSTTKSVAMSPDDDAPSFDIN) is disordered.

Belongs to the enoyl-CoA hydratase/isomerase family.

Its pathway is mycotoxin biosynthesis. Its function is as follows. Enoyl-CoA hydratase; part of the gene clusters that mediate the biosynthesis of the host-selective toxins (HSTs) AK-toxins responsible for Japanese pear black spot disease by the Japanese pear pathotype. AK-toxins are esters of 9,10-epoxy 8-hydroxy 9-methyldecatrienoic acid (EDA). On cellular level, AK-toxins affect plasma membrane of susceptible cells and cause a sudden increase in loss of K(+) after a few minutes of toxin treatment. The acyl-CoA ligase AKT1, the hydrolase AKT2 and enoyl-CoA hydratase AKT3 are all involved in the biosynthesis of the AK-, AF- and ACT-toxin common 9,10-epoxy-8-hydroxy-9-methyl-decatrienoic acid (EDA) structural moiety. Part of the EDA biosynthesis occurs in the peroxisome since these 3 enzymes are localized in peroxisomes. The exact roles of the 3 enzymes, as well as of additional AK-toxin clusters enzymes, including AKT4, AKT6 and AKTS1, have still to be elucidated. The Cytochrome P450 monooxygenase AKT7 on the other side functions to limit production of EDA and AK-toxin, probably via the catalysis of a side reaction of EDA or its precursor. The sequence is that of Enoyl-CoA hydratase AKT6-1 from Alternaria alternata (Alternaria rot fungus).